Consider the following 1374-residue polypeptide: DNA-directed RNA polymerase subunit beta (1374 aa).

The protein belongs to the RNA polymerase beta chain family. As to quaternary structure, the RNAP catalytic core consists of 2 alpha, 1 beta, 1 beta' and 1 omega subunit. When a sigma factor is associated with the core the holoenzyme is formed, which can initiate transcription.

It catalyses the reaction RNA(n) + a ribonucleoside 5'-triphosphate = RNA(n+1) + diphosphate. Functionally, DNA-dependent RNA polymerase catalyzes the transcription of DNA into RNA using the four ribonucleoside triphosphates as substrates. This chain is DNA-directed RNA polymerase subunit beta, found in Rickettsia typhi (strain ATCC VR-144 / Wilmington).